The following is a 1486-amino-acid chain: Chromosome partition protein MukB (1486 aa).

An ATP-binding site is contributed by 34 to 41 (GGNGAGKS). 3 coiled-coil regions span residues 326–418 (LEAD…QYNQ), 444–480 (LETFQAKELEATEKMLSLEQKMSMAQTAHSQFEQAYQ), and 509–603 (RHLA…RAPV). A flexible hinge region spans residues 666–783 (PGGSEDQRLN…EVPLFGRAAR (118 aa)). 3 coiled-coil regions span residues 835–923 (EAEI…AKLE), 977–1115 (EMLS…TAKA), and 1209–1266 (VEAI…QNVS).

Belongs to the SMC family. MukB subfamily. Homodimerization via its hinge domain. Binds to DNA via its C-terminal region. Interacts, and probably forms a ternary complex, with MukE and MukF via its C-terminal region. The complex formation is stimulated by calcium or magnesium. Interacts with tubulin-related protein FtsZ.

Its subcellular location is the cytoplasm. The protein resides in the nucleoid. Plays a central role in chromosome condensation, segregation and cell cycle progression. Functions as a homodimer, which is essential for chromosome partition. Involved in negative DNA supercoiling in vivo, and by this means organize and compact chromosomes. May achieve or facilitate chromosome segregation by condensation DNA from both sides of a centrally located replisome during cell division. The polypeptide is Chromosome partition protein MukB (Escherichia coli O1:K1 / APEC).